A 296-amino-acid polypeptide reads, in one-letter code: Probable endonuclease 4 (296 aa).

Residues His-68, His-109, Glu-144, Asp-178, His-181, His-213, Asp-226, His-228, and Glu-258 each contribute to the Zn(2+) site.

It belongs to the AP endonuclease 2 family. Requires Zn(2+) as cofactor.

It catalyses the reaction Endonucleolytic cleavage to 5'-phosphooligonucleotide end-products.. Endonuclease IV plays a role in DNA repair. It cleaves phosphodiester bonds at apurinic or apyrimidinic (AP) sites, generating a 3'-hydroxyl group and a 5'-terminal sugar phosphate. This is Probable endonuclease 4 from Staphylococcus aureus (strain NCTC 8325 / PS 47).